Reading from the N-terminus, the 104-residue chain is L-rhamnose mutarotase (104 aa).

Y18 provides a ligand contact to substrate. The active-site Proton donor is H22. Substrate is bound by residues Y41 and 76-77 (WW).

This sequence belongs to the rhamnose mutarotase family. As to quaternary structure, homodimer.

Its subcellular location is the cytoplasm. It catalyses the reaction alpha-L-rhamnose = beta-L-rhamnose. It participates in carbohydrate metabolism; L-rhamnose metabolism. In terms of biological role, involved in the anomeric conversion of L-rhamnose. The chain is L-rhamnose mutarotase from Salmonella dublin (strain CT_02021853).